Reading from the N-terminus, the 98-residue chain is Large ribosomal subunit protein bL28 (98 aa).

The protein belongs to the bacterial ribosomal protein bL28 family.

This is Large ribosomal subunit protein bL28 from Bartonella bacilliformis (strain ATCC 35685 / KC583 / Herrer 020/F12,63).